The chain runs to 359 residues: WD repeat-containing protein 89 homolog (359 aa).

6 WD repeats span residues 23–62, 65–104, 106–144, 146–186, 192–232, and 294–333; these read IGDDTCYVLDLSVTPNLLAAAGSNYLIKIYDRSNNTILNV, GHKDAINETKFIENTNTLLSCSSDKTVKIWDTKTGQCSQT, NQQGEIFSIDLNGDILAMGVGSMVVLYNLSTKKMIRKFD, SHTE…DDDA, NAED…KIKH, and VHTDVIRNVFWDKFKSELITSSEDSKIGFWTNNPSITNIL.

This Dictyostelium discoideum (Social amoeba) protein is WD repeat-containing protein 89 homolog (wdr89).